A 187-amino-acid polypeptide reads, in one-letter code: Adenine phosphoribosyltransferase (187 aa).

Belongs to the purine/pyrimidine phosphoribosyltransferase family. As to quaternary structure, homodimer.

The protein localises to the cytoplasm. It carries out the reaction AMP + diphosphate = 5-phospho-alpha-D-ribose 1-diphosphate + adenine. It functions in the pathway purine metabolism; AMP biosynthesis via salvage pathway; AMP from adenine: step 1/1. Functionally, catalyzes a salvage reaction resulting in the formation of AMP, that is energically less costly than de novo synthesis. The chain is Adenine phosphoribosyltransferase from Yersinia pseudotuberculosis serotype I (strain IP32953).